We begin with the raw amino-acid sequence, 142 residues long: Large ribosomal subunit protein uL13 (142 aa).

Belongs to the universal ribosomal protein uL13 family. Part of the 50S ribosomal subunit.

This protein is one of the early assembly proteins of the 50S ribosomal subunit, although it is not seen to bind rRNA by itself. It is important during the early stages of 50S assembly. The protein is Large ribosomal subunit protein uL13 of Methanosphaera stadtmanae (strain ATCC 43021 / DSM 3091 / JCM 11832 / MCB-3).